Here is a 261-residue protein sequence, read N- to C-terminus: Acetylglutamate kinase (261 aa).

Residues 46–47 (GG), Arg68, and Asn160 each bind substrate.

It belongs to the acetylglutamate kinase family. ArgB subfamily.

The protein localises to the cytoplasm. The catalysed reaction is N-acetyl-L-glutamate + ATP = N-acetyl-L-glutamyl 5-phosphate + ADP. It functions in the pathway amino-acid biosynthesis; L-arginine biosynthesis; N(2)-acetyl-L-ornithine from L-glutamate: step 2/4. In terms of biological role, catalyzes the ATP-dependent phosphorylation of N-acetyl-L-glutamate. In Shewanella loihica (strain ATCC BAA-1088 / PV-4), this protein is Acetylglutamate kinase.